The sequence spans 434 residues: Glycylpeptide N-tetradecanoyltransferase 1 (434 aa).

The tract at residues 1-24 is disordered; sequence MADNNSPPGSVEQKADQIVEANPL. Ala-2 is modified (N-acetylalanine). Residues 48–51, 184–186, and 192–196 contribute to the tetradecanoyl-CoA site; these read HKFW, LCV, and SKRLA. Leu-434 acts as the Proton acceptor; via carboxylate in catalysis.

It belongs to the NMT family. In terms of tissue distribution, expressed ubiquitously, with higher levels in young tissues (at protein level).

The protein localises to the cytoplasm. The catalysed reaction is N-terminal glycyl-[protein] + tetradecanoyl-CoA = N-tetradecanoylglycyl-[protein] + CoA + H(+). Its function is as follows. Adds a myristoyl group to the N-terminal glycine residue of certain cellular proteins. Can also use decanoyl-CoA and lauroyl-CoA as substrates. The protein is Glycylpeptide N-tetradecanoyltransferase 1 (NMT1) of Arabidopsis thaliana (Mouse-ear cress).